Reading from the N-terminus, the 124-residue chain is Small ribosomal subunit protein uS12 (124 aa).

Aspartate 89 is subject to 3-methylthioaspartic acid.

This sequence belongs to the universal ribosomal protein uS12 family. Part of the 30S ribosomal subunit. Contacts proteins S8 and S17. May interact with IF1 in the 30S initiation complex.

In terms of biological role, with S4 and S5 plays an important role in translational accuracy. Interacts with and stabilizes bases of the 16S rRNA that are involved in tRNA selection in the A site and with the mRNA backbone. Located at the interface of the 30S and 50S subunits, it traverses the body of the 30S subunit contacting proteins on the other side and probably holding the rRNA structure together. The combined cluster of proteins S8, S12 and S17 appears to hold together the shoulder and platform of the 30S subunit. The polypeptide is Small ribosomal subunit protein uS12 (Shewanella denitrificans (strain OS217 / ATCC BAA-1090 / DSM 15013)).